Here is a 750-residue protein sequence, read N- to C-terminus: 1,4-alpha-glucan branching enzyme GlgB (750 aa).

D425 serves as the catalytic Nucleophile. E478 serves as the catalytic Proton donor.

This sequence belongs to the glycosyl hydrolase 13 family. GlgB subfamily. Monomer.

It catalyses the reaction Transfers a segment of a (1-&gt;4)-alpha-D-glucan chain to a primary hydroxy group in a similar glucan chain.. It functions in the pathway glycan biosynthesis; glycogen biosynthesis. Its function is as follows. Catalyzes the formation of the alpha-1,6-glucosidic linkages in glycogen by scission of a 1,4-alpha-linked oligosaccharide from growing alpha-1,4-glucan chains and the subsequent attachment of the oligosaccharide to the alpha-1,6 position. The chain is 1,4-alpha-glucan branching enzyme GlgB from Cupriavidus pinatubonensis (strain JMP 134 / LMG 1197) (Cupriavidus necator (strain JMP 134)).